The sequence spans 2329 residues: Pre-mRNA-splicing factor 8 homolog (2329 aa).

The disordered stretch occupies residues 1–53; the sequence is MANYGGHPQTEPHAIPDSILEEKSRKWKQLQGKRYSEKKKFGMSDTQKEEMPP. Residues 34-53 are compositionally biased toward basic and acidic residues; it reads RYSEKKKFGMSDTQKEEMPP. The tract at residues 804–1295 is reverse transcriptase homology domain; it reads TTVHWLESRR…KIQTRIKIGL (492 aa). A linker region spans residues 1296–1570; it reads NSKMPSRFPP…TLKISLIQIF (275 aa). The interval 1506-1519 is important for branch point selection; the sequence is MKFKKLTNAQRSGL. The restriction endonuclease homology domain stretch occupies residues 1574-1745; that stretch reads LWQKIHESVV…LRERIRKGLQ (172 aa). The interval 1760 to 2013 is RNase H homology domain; sequence NYGELFSNQI…ILGMEISAPS (254 aa). An MPN domain is found at 2096 to 2227; that stretch reads TYILPKNILK…LTAYKLTPSG (132 aa).

Part of the U5 snRNP complex and of the U4/U6-U5 tri-snRNP complex.

The protein localises to the nucleus. Functionally, functions as a scaffold that mediates the ordered assembly of spliceosomal proteins and snRNAs. Required for the assembly of the U4/U6-U5 tri-snRNP complex. Functions as a scaffold that positions spliceosomal U2, U5 and U6 snRNAs at splice sites on pre-mRNA substrates, so that splicing can occur. Interacts with both the 5' and the 3' splice site. The polypeptide is Pre-mRNA-splicing factor 8 homolog (prp-8) (Caenorhabditis elegans).